A 362-amino-acid polypeptide reads, in one-letter code: Phosphoserine aminotransferase (362 aa).

L-glutamate is bound by residues S9 and R42. Residues 76–77, W102, T153, D174, and Q197 each bind pyridoxal 5'-phosphate; that span reads GR. The residue at position 198 (K198) is an N6-(pyridoxal phosphate)lysine. Residue 239-240 coordinates pyridoxal 5'-phosphate; the sequence is NT.

It belongs to the class-V pyridoxal-phosphate-dependent aminotransferase family. SerC subfamily. As to quaternary structure, homodimer. Pyridoxal 5'-phosphate is required as a cofactor.

The protein localises to the cytoplasm. The enzyme catalyses O-phospho-L-serine + 2-oxoglutarate = 3-phosphooxypyruvate + L-glutamate. It catalyses the reaction 4-(phosphooxy)-L-threonine + 2-oxoglutarate = (R)-3-hydroxy-2-oxo-4-phosphooxybutanoate + L-glutamate. The protein operates within amino-acid biosynthesis; L-serine biosynthesis; L-serine from 3-phospho-D-glycerate: step 2/3. It functions in the pathway cofactor biosynthesis; pyridoxine 5'-phosphate biosynthesis; pyridoxine 5'-phosphate from D-erythrose 4-phosphate: step 3/5. In terms of biological role, catalyzes the reversible conversion of 3-phosphohydroxypyruvate to phosphoserine and of 3-hydroxy-2-oxo-4-phosphonooxybutanoate to phosphohydroxythreonine. The chain is Phosphoserine aminotransferase from Salmonella arizonae (strain ATCC BAA-731 / CDC346-86 / RSK2980).